We begin with the raw amino-acid sequence, 245 residues long: 1-(5-phosphoribosyl)-5-[(5-phosphoribosylamino)methylideneamino] imidazole-4-carboxamide isomerase (245 aa).

D11 serves as the catalytic Proton acceptor. D132 functions as the Proton donor in the catalytic mechanism.

Belongs to the HisA/HisF family.

Its subcellular location is the cytoplasm. It carries out the reaction 1-(5-phospho-beta-D-ribosyl)-5-[(5-phospho-beta-D-ribosylamino)methylideneamino]imidazole-4-carboxamide = 5-[(5-phospho-1-deoxy-D-ribulos-1-ylimino)methylamino]-1-(5-phospho-beta-D-ribosyl)imidazole-4-carboxamide. It participates in amino-acid biosynthesis; L-histidine biosynthesis; L-histidine from 5-phospho-alpha-D-ribose 1-diphosphate: step 4/9. The protein is 1-(5-phosphoribosyl)-5-[(5-phosphoribosylamino)methylideneamino] imidazole-4-carboxamide isomerase of Bacillus licheniformis (strain ATCC 14580 / DSM 13 / JCM 2505 / CCUG 7422 / NBRC 12200 / NCIMB 9375 / NCTC 10341 / NRRL NRS-1264 / Gibson 46).